A 302-amino-acid polypeptide reads, in one-letter code: Pyridoxal 5'-phosphate synthase subunit PdxS (302 aa).

Asp32 contributes to the D-ribose 5-phosphate binding site. The Schiff-base intermediate with D-ribose 5-phosphate role is filled by Lys89. Gly161 is a binding site for D-ribose 5-phosphate. Arg173 contributes to the D-glyceraldehyde 3-phosphate binding site. Residues Gly222 and 243 to 244 contribute to the D-ribose 5-phosphate site; that span reads GS. The segment at 276 to 302 is disordered; the sequence is ASNIGEGMQGDPNADLPEDERMQDRGN.

The protein belongs to the PdxS/SNZ family. In the presence of PdxT, forms a dodecamer of heterodimers.

It carries out the reaction aldehydo-D-ribose 5-phosphate + D-glyceraldehyde 3-phosphate + L-glutamine = pyridoxal 5'-phosphate + L-glutamate + phosphate + 3 H2O + H(+). It functions in the pathway cofactor biosynthesis; pyridoxal 5'-phosphate biosynthesis. Catalyzes the formation of pyridoxal 5'-phosphate from ribose 5-phosphate (RBP), glyceraldehyde 3-phosphate (G3P) and ammonia. The ammonia is provided by the PdxT subunit. Can also use ribulose 5-phosphate and dihydroxyacetone phosphate as substrates, resulting from enzyme-catalyzed isomerization of RBP and G3P, respectively. The polypeptide is Pyridoxal 5'-phosphate synthase subunit PdxS (Halobacterium salinarum (strain ATCC 29341 / DSM 671 / R1)).